The primary structure comprises 328 residues: Protoheme IX farnesyltransferase (328 aa).

8 helical membrane passes run 31 to 51 (IILL…KGEV), 53 to 73 (LFLL…ANAI), 120 to 140 (VFAN…YVGV), 153 to 173 (IVIG…AVTG), 181 to 201 (LLFA…AIYI), 226 to 246 (IWVY…PLHV), 250 to 270 (IYAV…WQLL), and 285 to 305 (YSIY…LPFT).

This sequence belongs to the UbiA prenyltransferase family. Protoheme IX farnesyltransferase subfamily.

It is found in the cell inner membrane. The enzyme catalyses heme b + (2E,6E)-farnesyl diphosphate + H2O = Fe(II)-heme o + diphosphate. Its pathway is porphyrin-containing compound metabolism; heme O biosynthesis; heme O from protoheme: step 1/1. Functionally, converts heme B (protoheme IX) to heme O by substitution of the vinyl group on carbon 2 of heme B porphyrin ring with a hydroxyethyl farnesyl side group. In Trichodesmium erythraeum (strain IMS101), this protein is Protoheme IX farnesyltransferase.